Consider the following 441-residue polypeptide: Protein arginine methyltransferase NDUFAF7, mitochondrial (441 aa).

A mitochondrion-targeting transit peptide spans 1–46 (MSVLLRSGLGPLCAVARAAIPFIWRGKYFSSGNEPAENPVTPMLRH).

It belongs to the NDUFAF7 family. In terms of assembly, interacts with NDUFS2.

Its subcellular location is the mitochondrion. The catalysed reaction is L-arginyl-[protein] + 2 S-adenosyl-L-methionine = N(omega),N(omega)'-dimethyl-L-arginyl-[protein] + 2 S-adenosyl-L-homocysteine + 2 H(+). Its function is as follows. Arginine methyltransferase involved in the assembly or stability of mitochondrial NADH:ubiquinone oxidoreductase complex (complex I). Acts by mediating symmetric dimethylation of 'Arg-118' of NDUFS2 after it assembles into the complex I, stabilizing the early intermediate complex. This is Protein arginine methyltransferase NDUFAF7, mitochondrial from Homo sapiens (Human).